We begin with the raw amino-acid sequence, 346 residues long: MNNFNINNLVRENIKNMQAYASARDEFKDFTHNMVYLDANENPFSNGINRYPDPQQKKLKGFLAQQNKINENQMLLGNGSDEVLDLVFRAFCEPNVDNVITLPPTYGMYGVLANINAIENKEVLLSANFQPNINEILKNINENTKIIFLCSPNNPTGNSFDDQAVLTLLKNFNGLVVIDEAYIDFSKNGSWLHVISDYPNLLITQTLSKAYAMAGLRIGILYASAAIISILNKIKPPYNINNLSQESALKKLEQSTLNFHVKKIINERKKMVQSLISIPFIEKIYPSDANFILIKVEDANKRYNQLIEKGIVIRNRSNQPLCENCLRITIGTKEENEKLITVLKAL.

K209 is subject to N6-(pyridoxal phosphate)lysine.

This sequence belongs to the class-II pyridoxal-phosphate-dependent aminotransferase family. Histidinol-phosphate aminotransferase subfamily. Homodimer. It depends on pyridoxal 5'-phosphate as a cofactor.

It carries out the reaction L-histidinol phosphate + 2-oxoglutarate = 3-(imidazol-4-yl)-2-oxopropyl phosphate + L-glutamate. The protein operates within amino-acid biosynthesis; L-histidine biosynthesis; L-histidine from 5-phospho-alpha-D-ribose 1-diphosphate: step 7/9. In Flavobacterium psychrophilum (strain ATCC 49511 / DSM 21280 / CIP 103535 / JIP02/86), this protein is Histidinol-phosphate aminotransferase.